A 103-amino-acid chain; its full sequence is MKTLLLTLVVVTIICLDLGYTEMCNMCVRPYPFMSSCCPEGQDRCYKSYWVNENGKQKKYHGKYPVILERGCVTACTGPGSGSIYNLYTCCPTNRCGSSSTSG.

The N-terminal stretch at 1-21 is a signal peptide; it reads MKTLLLTLVVVTIICLDLGYT. Disulfide bonds link C24/C45, C27/C37, C38/C72, C76/C90, and C91/C96.

It belongs to the three-finger toxin family. Ancestral subfamily. Orphan group XVII sub-subfamily. In terms of tissue distribution, expressed by the venom gland.

The protein resides in the secreted. This toxin inhibits the binding of [3H]quinuclidinyl benzilate to the M2 muscarinic acetylcholine (mAchR) receptor subtype (CHRM2). This is Muscarinic toxin BM14 from Bungarus multicinctus (Many-banded krait).